The primary structure comprises 364 residues: tRNA 2-selenouridine synthase (364 aa).

One can recognise a Rhodanese domain in the interval 12-135 (FLNDRPMMDT…MRTFLLDTTE (124 aa)). Cysteine 95 acts as the S-selanylcysteine intermediate in catalysis.

The protein belongs to the SelU family. In terms of assembly, monomer.

It carries out the reaction 5-methylaminomethyl-2-thiouridine(34) in tRNA + selenophosphate + (2E)-geranyl diphosphate + H2O + H(+) = 5-methylaminomethyl-2-selenouridine(34) in tRNA + (2E)-thiogeraniol + phosphate + diphosphate. It catalyses the reaction 5-methylaminomethyl-2-thiouridine(34) in tRNA + (2E)-geranyl diphosphate = 5-methylaminomethyl-S-(2E)-geranyl-thiouridine(34) in tRNA + diphosphate. The enzyme catalyses 5-methylaminomethyl-S-(2E)-geranyl-thiouridine(34) in tRNA + selenophosphate + H(+) = 5-methylaminomethyl-2-(Se-phospho)selenouridine(34) in tRNA + (2E)-thiogeraniol. The catalysed reaction is 5-methylaminomethyl-2-(Se-phospho)selenouridine(34) in tRNA + H2O = 5-methylaminomethyl-2-selenouridine(34) in tRNA + phosphate. Functionally, involved in the post-transcriptional modification of the uridine at the wobble position (U34) of tRNA(Lys), tRNA(Glu) and tRNA(Gln). Catalyzes the conversion of 2-thiouridine (S2U-RNA) to 2-selenouridine (Se2U-RNA). Acts in a two-step process involving geranylation of 2-thiouridine (S2U) to S-geranyl-2-thiouridine (geS2U) and subsequent selenation of the latter derivative to 2-selenouridine (Se2U) in the tRNA chain. The polypeptide is tRNA 2-selenouridine synthase (Pseudomonas fluorescens (strain ATCC BAA-477 / NRRL B-23932 / Pf-5)).